The primary structure comprises 110 residues: Thiosulfate sulfurtransferase GlpE (110 aa).

A Rhodanese domain is found at 17-105 (HQGKAVLVDI…WHRHFPAEVE (89 aa)). The active-site Cysteine persulfide intermediate is Cys65.

This sequence belongs to the GlpE family.

It localises to the cytoplasm. The enzyme catalyses thiosulfate + hydrogen cyanide = thiocyanate + sulfite + 2 H(+). It catalyses the reaction thiosulfate + [thioredoxin]-dithiol = [thioredoxin]-disulfide + hydrogen sulfide + sulfite + 2 H(+). Its function is as follows. Transferase that catalyzes the transfer of sulfur from thiosulfate to thiophilic acceptors such as cyanide or dithiols. May function in a CysM-independent thiosulfate assimilation pathway by catalyzing the conversion of thiosulfate to sulfite, which can then be used for L-cysteine biosynthesis. This Enterobacter sp. (strain 638) protein is Thiosulfate sulfurtransferase GlpE.